The sequence spans 472 residues: MDLFRKKLAVLDLTHGGIPIARKLAALGNDVSGVDVYGTVDQALLGELEEKYGIRCSKAPLPVSDFDLLIAPVHLDPAYPMLIKARSEGKTVLSHHEAVGKILQADPRLSEIKIVEITGVKAKTSTASLLADMLSRSFKVVLHTSRGLEAWKAGIPFLIHRGLSITPGSILIAVEKSLEQEIRPEFFIFEISIGATGTADLGILTTLSPDYGIANNTSLASDAKLQLVLNARPGSTLLLNAGAEKALEAAKGSLAKVLTFKDPFCSDSYLKLADAPDFVLETESGAEKNLTLHFLRRGEELFSASLCPGYNSSAYRTAFVAASAAALELGVGLEAIVSVLEEFRGLSGRMQEKELNGVVLVDNSNSGMDILSAEKALEYALLKKKDEKKGNIILILGEEASQVCEGLPPGSVQGFLEKFGTKCRHIILVGERMEAVAAENASYAGSLPEGLQKASELAGTEDIILSSVKCFR.

Residue 119–125 (GVKAKTS) participates in ATP binding.

The protein belongs to the MurCDEF family.

The enzyme catalyses 15,17(3)-seco-F430-17(3)-acid + ATP = coenzyme F430 + ADP + phosphate. In terms of biological role, involved in the biosynthesis of the unique nickel-containing tetrapyrrole coenzyme F430, the prosthetic group of methyl-coenzyme M reductase (MCR), which plays a key role in methanogenesis and anaerobic methane oxidation. Catalyzes the activation the g-propionate side chain of 15,17(3)-seco-F430-17(3)-acid (seco-F430) for intramolecular C-C bond formation to yield the carbocyclic F ring of coenzyme F430. The sequence is that of Coenzyme F(430) synthetase from Methanosarcina acetivorans (strain ATCC 35395 / DSM 2834 / JCM 12185 / C2A).